We begin with the raw amino-acid sequence, 207 residues long: Small ribosomal subunit protein uS4 (207 aa).

A disordered region spans residues Lys31–Asp51. Residues Ser97 to Leu162 form the S4 RNA-binding domain.

Belongs to the universal ribosomal protein uS4 family. In terms of assembly, part of the 30S ribosomal subunit. Contacts protein S5. The interaction surface between S4 and S5 is involved in control of translational fidelity.

Its function is as follows. One of the primary rRNA binding proteins, it binds directly to 16S rRNA where it nucleates assembly of the body of the 30S subunit. Functionally, with S5 and S12 plays an important role in translational accuracy. This Bordetella bronchiseptica (strain ATCC BAA-588 / NCTC 13252 / RB50) (Alcaligenes bronchisepticus) protein is Small ribosomal subunit protein uS4.